Consider the following 277-residue polypeptide: Thiazole synthase (277 aa).

Lys107 acts as the Schiff-base intermediate with DXP in catalysis. Residues Gly168, 194 to 195 (AG), and 216 to 217 (AS) contribute to the 1-deoxy-D-xylulose 5-phosphate site.

Belongs to the ThiG family. As to quaternary structure, homotetramer. Forms heterodimers with either ThiH or ThiS.

The protein resides in the cytoplasm. It carries out the reaction [ThiS sulfur-carrier protein]-C-terminal-Gly-aminoethanethioate + 2-iminoacetate + 1-deoxy-D-xylulose 5-phosphate = [ThiS sulfur-carrier protein]-C-terminal Gly-Gly + 2-[(2R,5Z)-2-carboxy-4-methylthiazol-5(2H)-ylidene]ethyl phosphate + 2 H2O + H(+). It participates in cofactor biosynthesis; thiamine diphosphate biosynthesis. Its function is as follows. Catalyzes the rearrangement of 1-deoxy-D-xylulose 5-phosphate (DXP) to produce the thiazole phosphate moiety of thiamine. Sulfur is provided by the thiocarboxylate moiety of the carrier protein ThiS. In vitro, sulfur can be provided by H(2)S. In Cutibacterium acnes (strain DSM 16379 / KPA171202) (Propionibacterium acnes), this protein is Thiazole synthase.